We begin with the raw amino-acid sequence, 309 residues long: Serpentine receptor class gamma-47 (309 aa).

5 helical membrane passes run 22–42 (IVQMFYGTITVVFMLILLFLF), 140–160 (FKLYYVILCGISIFFTSVLPL), 190–210 (IYSSVYFIILLLVGIISIFYI), 230–250 (LITLVYGFLYSGILLWSILMA), and 272–292 (ISSDLITLSLPYILLIFDVGI).

Belongs to the nematode receptor-like protein srg family.

It is found in the membrane. The sequence is that of Serpentine receptor class gamma-47 (srg-47) from Caenorhabditis elegans.